The following is a 624-amino-acid chain: Chaperone protein HtpG (624 aa).

The segment at 1-336 (MKGQETRGFQ…SNDLPLNVSR (336 aa)) is a; substrate-binding. The interval 337–552 (EILQDSTVTR…ADEMSTQMAK (216 aa)) is b. Residues 553–624 (LFAAAGQSVP…IRRMNQLLVS (72 aa)) are c.

The protein belongs to the heat shock protein 90 family. Homodimer.

The protein localises to the cytoplasm. Functionally, molecular chaperone. Has ATPase activity. The protein is Chaperone protein HtpG of Salmonella paratyphi A (strain ATCC 9150 / SARB42).